Reading from the N-terminus, the 355-residue chain is Probable butyrate kinase (355 aa).

The protein belongs to the acetokinase family.

The protein resides in the cytoplasm. It carries out the reaction butanoate + ATP = butanoyl phosphate + ADP. The chain is Probable butyrate kinase from Clostridium botulinum (strain Alaska E43 / Type E3).